The chain runs to 967 residues: LRR receptor-like serine/threonine-protein kinase ERL2 (967 aa).

An N-terminal signal peptide occupies residues 1-27 (MRRIETMKGLFFCLGMVVFMLLGSVSP). Over 28-585 (MNNEGKALMA…SLPKSQVFTR (558 aa)) the chain is Extracellular. Asn-70 and Asn-79 each carry an N-linked (GlcNAc...) asparagine glycan. 20 LRR repeats span residues 74–97 (NVVSLNLSNLNLGGEISSALGDLM), 98–120 (NLQSIDLQGNKLGGQIPDEIGNC), 122–145 (SLAYVDFSTNLLFGDIPFSISKLK), 146–166 (QLEFLNLKNNQLTGPIPATLT), 170–192 (NLKTLDLARNQLTGEIPRLLYWN), 194–216 (VLQYLGLRGNMLTGTLSPDMCQL), 218–240 (GLWYFDVRGNNLTGTIPESIGNC), 242–261 (SFEILDVSYNQITGVIPYNI), 265–287 (QVATLSLQGNKLTGRIPEVIGLM), 289–311 (ALAVLDLSDNELTGPIPPILGNL), 313–335 (FTGKLYLHGNKLTGQIPPELGNM), 337–359 (RLSYLQLNDNELVGKIPPELGKL), 361–382 (QLFELNLANNNLVGLIPSNISS), 385–406 (ALNQFNVHGNFLSGAVPLEFRN), 409–431 (SLTYLNLSSNSFKGKIPAELGHI), 433–456 (NLDTLDLSGNNFSGSIPLTLGDLE), 457–479 (HLLILNLSRNHLNGTLPAEFGNL), 481–503 (SIQIIDVSFNFLAGVIPTELGQL), 505–527 (NINSLILNNNKIHGKIPDQLTNC), and 529–550 (SLANLNISFNNLSGIIPPMKNF). Residues Asn-228 and Asn-239 are each glycosylated (N-linked (GlcNAc...) asparagine). Asn-310 and Asn-334 each carry an N-linked (GlcNAc...) asparagine glycan. A glycan (N-linked (GlcNAc...) asparagine) is linked at Asn-379. Asn-414, Asn-443, Asn-462, and Asn-469 each carry an N-linked (GlcNAc...) asparagine glycan. 3 N-linked (GlcNAc...) asparagine glycosylation sites follow: Asn-534, Asn-539, and Asn-549. Residues 586 to 606 (VAVICMVLGFITLICMIFIAV) traverse the membrane as a helical segment. The Cytoplasmic segment spans residues 607-967 (YKSKQQKPVL…FREDISKSSL (361 aa)). Phosphothreonine occurs at positions 640 and 648. Residues 651 to 921 (LDEKYIIGYG…EVSRVLLSLV (271 aa)) form the Protein kinase domain. ATP is bound by residues 657 to 665 (IGYGASSTV) and Lys-679. A phosphotyrosine mark is found at Tyr-724 and Tyr-763. The active-site Proton acceptor is Asp-776. Tyr-818 carries the post-translational modification Phosphotyrosine. At Thr-826 the chain carries Phosphothreonine. The tract at residues 921 to 955 (VPSPPPKKLPSPAKVQEGEERRESHSSDTTTPQWF) is disordered. Positions 936-946 (QEGEERRESHS) are enriched in basic and acidic residues.

Belongs to the protein kinase superfamily. Ser/Thr protein kinase family. Mostly expressed in developing organs, including bud clusters, flowers, siliques and young rosettes. Also detected in mature aboveground organs, such as leaves, stems and pedicels, but barely in roots.

It is found in the membrane. It carries out the reaction L-seryl-[protein] + ATP = O-phospho-L-seryl-[protein] + ADP + H(+). The enzyme catalyses L-threonyl-[protein] + ATP = O-phospho-L-threonyl-[protein] + ADP + H(+). Receptor kinase that regulates inflorescence architecture and organ shape as well as stomatal patterning, including density and clustering, together with ERL1 and ER. This chain is LRR receptor-like serine/threonine-protein kinase ERL2 (ERL2), found in Arabidopsis thaliana (Mouse-ear cress).